Consider the following 279-residue polypeptide: Thymidylate synthase (279 aa).

133-134 contacts dUMP; sequence RR. Residue C154 is the Nucleophile of the active site. Residues 178-181, N189, and 219-221 contribute to the dUMP site; these read RSND and HIY. A (6R)-5,10-methylene-5,6,7,8-tetrahydrofolate-binding site is contributed by D181. A278 serves as a coordination point for (6R)-5,10-methylene-5,6,7,8-tetrahydrofolate.

This sequence belongs to the thymidylate synthase family. Bacterial-type ThyA subfamily. As to quaternary structure, homodimer.

It localises to the cytoplasm. It catalyses the reaction dUMP + (6R)-5,10-methylene-5,6,7,8-tetrahydrofolate = 7,8-dihydrofolate + dTMP. Its pathway is pyrimidine metabolism; dTTP biosynthesis. Its function is as follows. Catalyzes the reductive methylation of 2'-deoxyuridine-5'-monophosphate (dUMP) to 2'-deoxythymidine-5'-monophosphate (dTMP) while utilizing 5,10-methylenetetrahydrofolate (mTHF) as the methyl donor and reductant in the reaction, yielding dihydrofolate (DHF) as a by-product. This enzymatic reaction provides an intracellular de novo source of dTMP, an essential precursor for DNA biosynthesis. This chain is Thymidylate synthase, found in Streptococcus pyogenes serotype M12 (strain MGAS2096).